Consider the following 371-residue polypeptide: Ferrochelatase (371 aa).

Fe cation-binding residues include histidine 218 and glutamate 299.

It belongs to the ferrochelatase family.

The protein resides in the cytoplasm. It catalyses the reaction heme b + 2 H(+) = protoporphyrin IX + Fe(2+). It functions in the pathway porphyrin-containing compound metabolism; protoheme biosynthesis; protoheme from protoporphyrin-IX: step 1/1. Functionally, catalyzes the ferrous insertion into protoporphyrin IX. This is Ferrochelatase from Cupriavidus taiwanensis (strain DSM 17343 / BCRC 17206 / CCUG 44338 / CIP 107171 / LMG 19424 / R1) (Ralstonia taiwanensis (strain LMG 19424)).